An 821-amino-acid polypeptide reads, in one-letter code: Elongator complex protein 2 (821 aa).

WD repeat units lie at residues 56 to 100 (GHTA…VLKS), 105 to 152 (GHEG…VKCL), 160 to 200 (GFVL…FQKM), 205 to 246 (GHED…TSLE), 280 to 328 (GHEN…GVWL), 338 to 377 (GNTLGFYGCQFGENGSMIIAHAFHGAMHLWKQSTVNPRQW), 385 to 424 (GHFDGVQDLIWDPEGEFIITTSTDQTTRLFAPWKKKNQSQ), 435 to 473 (IHGYNLKCLAMIDRFQFVSGADEKVLRVFSAPRNFVENF), 563 to 607 (GHGY…QVQS), 610 to 649 (YHTLTVTQMAFSPDDKFLLAVSRDRTWSLWKRQDVTSAEF), 665 to 704 (VHSRIIWSCDWSPDSKYFFTGSRDKKVVVWGECNSSYNPM), 716 to 760 (DVGS…QETK), and 773 to 821 (SHTL…RCAL).

This sequence belongs to the WD repeat ELP2 family. Component of the elongator complex which consists of ELP1, ELP2, ELP3, ELP4, ELP5 and ELP6. Interacts with STAT3 and JAKs.

It is found in the cytoplasm. The protein resides in the nucleus. Its pathway is tRNA modification; 5-methoxycarbonylmethyl-2-thiouridine-tRNA biosynthesis. Functionally, component of the elongator complex which is required for multiple tRNA modifications, including mcm5U (5-methoxycarbonylmethyl uridine), mcm5s2U (5-methoxycarbonylmethyl-2-thiouridine), and ncm5U (5-carbamoylmethyl uridine). The elongator complex catalyzes the formation of carboxymethyluridine in the wobble base at position 34 in tRNAs. The chain is Elongator complex protein 2 (Elp2) from Rattus norvegicus (Rat).